A 383-amino-acid chain; its full sequence is MKNKLPPFIEIYRALIATPSISATEEALDQSNADLITLLADWFKDLGFNVEVQPVPGTRNKFNMLASTGQGAGGLLLAGHTDTVPFDDGRWTRDPFTLTEHDGKLYGLGTADMKGFFAFILDALRDVDVTKLAKPLYILATADEETSMAGARYFAETTALRPDCAIIGEPTSLQPVRAHKGHISNAIRIQGQSGHSSDPARGVNAIELMHDAIGHILQLRDNLKERYHYEAFTVPYPTLNLGHIHGGDASNRICACCELHMDIRPLPGMTLNELNGLLNDALAPVSERWPGRLTVDELHPPIPGYECPPNHQLVEVVEKLLGAKTEVVNYCTEAPFIQTLCPTLVLGPGSINQAHQPDEYLETRFIKPTRELITQVIHHFCWH.

H80 provides a ligand contact to Zn(2+). D82 is an active-site residue. D112 is a binding site for Zn(2+). Residue E144 is part of the active site. Zn(2+) is bound by residues E145, E169, and H355.

This sequence belongs to the peptidase M20A family. ArgE subfamily. As to quaternary structure, homodimer. Zn(2+) serves as cofactor. It depends on Co(2+) as a cofactor. Glutathione is required as a cofactor.

The protein resides in the cytoplasm. The catalysed reaction is N(2)-acetyl-L-ornithine + H2O = L-ornithine + acetate. The protein operates within amino-acid biosynthesis; L-arginine biosynthesis; L-ornithine from N(2)-acetyl-L-ornithine (linear): step 1/1. In terms of biological role, catalyzes the hydrolysis of the amide bond of N(2)-acetylated L-amino acids. Cleaves the acetyl group from N-acetyl-L-ornithine to form L-ornithine, an intermediate in L-arginine biosynthesis pathway, and a branchpoint in the synthesis of polyamines. In Escherichia coli O7:K1 (strain IAI39 / ExPEC), this protein is Acetylornithine deacetylase.